We begin with the raw amino-acid sequence, 307 residues long: MKLTLNRILFSGLALSILLTLTGCVGRDAHGNPKGMIWEFLGKPMSYFIDYFANNAGLGYGLAIIIVTIIVRTLILPLGLYQSWKASYQSEKMAFLKPVFEPINKRIKQANSQEEKMAAQTELMAAQRAHGINPLGGIGCLPLLIQMPFFSAMYFAAQYTKGVSTSTFMGIDLGSRSLVLTAIIAALYFFQSWLSMMAVSEEQREQMKTMMYTMPIMMIFMSFSLPAGVGLYWLVGGFFSIIQQLITTYLLKPRLHKQIKEEYAKNPPKAYQSTSSRKDVTPSQNMEQANLPKKIKSNRNAGKQRKR.

A signal peptide spans 1 to 23 (MKLTLNRILFSGLALSILLTLTG). Cys24 is lipidated: N-palmitoyl cysteine. Cys24 is lipidated: S-diacylglycerol cysteine. 5 helical membrane-spanning segments follow: residues 58–78 (LGYG…ILPL), 135–155 (LGGI…AMYF), 179–199 (VLTA…MMAV), 209–225 (TMMY…SFSL), and 231–251 (LYWL…TYLL). Residues 263–307 (YAKNPPKAYQSTSSRKDVTPSQNMEQANLPKKIKSNRNAGKQRKR) form a disordered region. Positions 271–288 (YQSTSSRKDVTPSQNMEQ) are enriched in polar residues. Positions 293-307 (KKIKSNRNAGKQRKR) are enriched in basic residues.

This sequence belongs to the OXA1/ALB3/YidC family. Type 2 subfamily.

The protein localises to the cell membrane. In terms of biological role, required for the insertion and/or proper folding and/or complex formation of integral membrane proteins into the membrane. Involved in integration of membrane proteins that insert both dependently and independently of the Sec translocase complex, as well as at least some lipoproteins. The sequence is that of Membrane protein insertase YidC 2 from Streptococcus pyogenes serotype M1.